The chain runs to 547 residues: CTP synthase (547 aa).

Residues 1–265 (MTRYVFITGG…DEIVLRKLHI (265 aa)) form an amidoligase domain region. Ser-13 lines the CTP pocket. Residue Ser-13 coordinates UTP. ATP-binding positions include 14–19 (SLGKGI) and Asp-71. Mg(2+)-binding residues include Asp-71 and Glu-139. Residues 146–148 (DIE), 186–191 (KTKPTQ), and Lys-222 contribute to the CTP site. Residues 186–191 (KTKPTQ) and Lys-222 contribute to the UTP site. The Glutamine amidotransferase type-1 domain maps to 290–541 (TVGMVGKYVD…IRAARAQHEK (252 aa)). Residue Gly-351 coordinates L-glutamine. Catalysis depends on Cys-378, which acts as the Nucleophile; for glutamine hydrolysis. L-glutamine contacts are provided by residues 379-382 (LGMQ), Glu-402, and Arg-469. Residues His-514 and Glu-516 contribute to the active site.

This sequence belongs to the CTP synthase family. Homotetramer.

The enzyme catalyses UTP + L-glutamine + ATP + H2O = CTP + L-glutamate + ADP + phosphate + 2 H(+). It catalyses the reaction L-glutamine + H2O = L-glutamate + NH4(+). It carries out the reaction UTP + NH4(+) + ATP = CTP + ADP + phosphate + 2 H(+). The protein operates within pyrimidine metabolism; CTP biosynthesis via de novo pathway; CTP from UDP: step 2/2. With respect to regulation, allosterically activated by GTP, when glutamine is the substrate; GTP has no effect on the reaction when ammonia is the substrate. The allosteric effector GTP functions by stabilizing the protein conformation that binds the tetrahedral intermediate(s) formed during glutamine hydrolysis. Inhibited by the product CTP, via allosteric rather than competitive inhibition. In terms of biological role, catalyzes the ATP-dependent amination of UTP to CTP with either L-glutamine or ammonia as the source of nitrogen. Regulates intracellular CTP levels through interactions with the four ribonucleotide triphosphates. The sequence is that of CTP synthase from Thioalkalivibrio sulfidiphilus (strain HL-EbGR7).